Here is a 434-residue protein sequence, read N- to C-terminus: Nuclear distribution protein PAC1 (434 aa).

The 33-residue stretch at 8 to 40 (QKDDLHKAMLDYLYANNHTAAFNALKESAGITY) folds into the LisH domain. The stretch at 57 to 83 (TSVIRLQKKIMELENRNAALQEELSMS) forms a coiled coil. 7 WD repeats span residues 106 to 147 (GHRA…RTLK), 149 to 187 (HTKP…KNTK), 191 to 230 (GHDH…QVRT), 233 to 272 (GHSE…PKSE), 275 to 334 (GHEN…MIRN), 337 to 378 (GHDN…RIVE), and 401 to 434 (KKVN…IWLP).

This sequence belongs to the WD repeat LIS1/nudF family. In terms of assembly, self-associates. Interacts with NDL1 and dynein.

It localises to the cytoplasm. Its subcellular location is the cytoskeleton. The protein resides in the spindle pole. In terms of biological role, positively regulates the activity of the minus-end directed microtubule motor protein dynein. May enhance dynein-mediated microtubule sliding by targeting dynein to the microtubule plus end. Required for nuclear migration during vegetative growth as well as development. Required for retrograde early endosome (EE) transport from the hyphal tip. Required for localization of dynein to the mitotic spindle poles. Recruits additional proteins to the dynein complex at SPBs. The polypeptide is Nuclear distribution protein PAC1 (Coprinopsis cinerea (strain Okayama-7 / 130 / ATCC MYA-4618 / FGSC 9003) (Inky cap fungus)).